Consider the following 310-residue polypeptide: tRNA dimethylallyltransferase (310 aa).

ATP is bound at residue 5-12; it reads GPTASGKS. Residue 7 to 12 coordinates substrate; sequence TASGKS. An interaction with substrate tRNA region spans residues 30 to 33; the sequence is DSMQ.

This sequence belongs to the IPP transferase family. As to quaternary structure, monomer. Mg(2+) serves as cofactor.

The enzyme catalyses adenosine(37) in tRNA + dimethylallyl diphosphate = N(6)-dimethylallyladenosine(37) in tRNA + diphosphate. Catalyzes the transfer of a dimethylallyl group onto the adenine at position 37 in tRNAs that read codons beginning with uridine, leading to the formation of N6-(dimethylallyl)adenosine (i(6)A). The sequence is that of tRNA dimethylallyltransferase from Rhodopseudomonas palustris (strain HaA2).